A 337-amino-acid chain; its full sequence is uncharacterized protein (337 aa).

Residues 1–11 (MSEIEEEEEEG) show a composition bias toward acidic residues. The segment at 1–20 (MSEIEEEEEEGSASAITGSR) is disordered. An N-acetylserine modification is found at Ser-2. A coiled-coil region spans residues 50–130 (ALSTRVSALE…LQRDVSKLEG (81 aa)). Residues 139–242 (LQDDDQNAGT…PISPRRHSVS (104 aa)) form a disordered region. Residues 170–182 (SSIQSQQASEAIE) are compositionally biased toward low complexity. Positions 197-211 (LSASLPLVSQTTTPR) are enriched in polar residues. Thr-213 is modified (phosphothreonine). Residue Ser-217 is modified to Phosphoserine. The segment covering 223–233 (ASGTPKTTSRP) has biased composition (polar residues). At Thr-226 the chain carries Phosphothreonine. Ser-235 is subject to Phosphoserine.

This is an uncharacterized protein from Arabidopsis thaliana (Mouse-ear cress).